A 265-amino-acid chain; its full sequence is Oxygen-evolving enhancer protein 2-2, chloroplastic (265 aa).

A chloroplast-targeting transit peptide spans 1–79 (MASTQCFLHH…VGSKVSPADA (79 aa)).

It belongs to the PsbP family.

It is found in the plastid. Its subcellular location is the chloroplast thylakoid membrane. Functionally, may be involved in the regulation of photosystem II. This is Oxygen-evolving enhancer protein 2-2, chloroplastic (PSBP2) from Nicotiana tabacum (Common tobacco).